A 141-amino-acid chain; its full sequence is Large ribosomal subunit protein uL11 (141 aa).

The protein belongs to the universal ribosomal protein uL11 family. In terms of assembly, part of the ribosomal stalk of the 50S ribosomal subunit. Interacts with L10 and the large rRNA to form the base of the stalk. L10 forms an elongated spine to which L12 dimers bind in a sequential fashion forming a multimeric L10(L12)X complex. Post-translationally, one or more lysine residues are methylated.

In terms of biological role, forms part of the ribosomal stalk which helps the ribosome interact with GTP-bound translation factors. The chain is Large ribosomal subunit protein uL11 from Prochlorococcus marinus (strain MIT 9515).